Reading from the N-terminus, the 360-residue chain is Insulin gene enhancer protein ISL-2 (360 aa).

LIM zinc-binding domains are found at residues 25 to 86 and 87 to 149; these read AMCV…RLFG and IKCA…LLER. The tract at residues 151–177 is disordered; the sequence is AAGSPRSPGPLPGTPPGLHLPDAGSGQ. 2 positions are modified to phosphoserine: Ser-154 and Ser-157. A DNA-binding region (homeobox) is located at residues 192–251; the sequence is TTRVRTVLNEKQLHTLRTCYAANPRPDALMKEQLVEMTGLSPRVIRVWFQNKRCKDKKKS. Residues 273–302 form an LIM-binding domain (LID) region; sequence GTLLVAGSPSAHENAVQGSAVEVQTYQPPW. Ser-280 is subject to Phosphoserine. A compositionally biased stretch (low complexity) spans 328-337; that stretch reads SGSLGNSSGS. Positions 328-360 are disordered; sequence SGSLGNSSGSDVTSLSSQLPDTPNSMVPSPVET. Over residues 338–360 the composition is skewed to polar residues; the sequence is DVTSLSSQLPDTPNSMVPSPVET.

Interacts with LHX4.

Its subcellular location is the nucleus. In terms of biological role, transcriptional factor that defines subclasses of motoneurons that segregate into columns in the spinal cord and select distinct axon pathways. The chain is Insulin gene enhancer protein ISL-2 (Isl2) from Rattus norvegicus (Rat).